A 130-amino-acid chain; its full sequence is Type VII secretion system extracellular protein C (130 aa).

Belongs to the EsxC family. Forms both homodimers and heterodimers with EsxA. Homodimerization is calcium-dependent.

The protein localises to the secreted. In Staphylococcus aureus (strain USA300), this protein is Type VII secretion system extracellular protein C.